Here is a 288-residue protein sequence, read N- to C-terminus: 5,10-methylenetetrahydrofolate reductase (288 aa).

Residues A51, H73, G106, D107, A118, Y140, H144, and K159 each contribute to the FAD site. D107 serves as a coordination point for (6S)-5-methyl-5,6,7,8-tetrahydrofolate. A (6S)-5-methyl-5,6,7,8-tetrahydrofolate-binding site is contributed by Q175. Q175 serves as a coordination point for NADH.

The protein belongs to the methylenetetrahydrofolate reductase family. Requires FAD as cofactor.

It catalyses the reaction (6S)-5-methyl-5,6,7,8-tetrahydrofolate + NAD(+) = (6R)-5,10-methylene-5,6,7,8-tetrahydrofolate + NADH + H(+). It functions in the pathway one-carbon metabolism; tetrahydrofolate interconversion. It participates in amino-acid biosynthesis; L-methionine biosynthesis via de novo pathway. Its function is as follows. Catalyzes the NADH-dependent reduction of 5,10-methylenetetrahydrofolate to 5-methyltetrahydrofolate. Is required to provide the methyl group necessary for methionine synthetase to convert homocysteine to methionine; the methyl group is given by 5-methyltetrahydrofolate. Is required for Sphingobium SYK-6 to grow on vanillate or syringate as the sole source of carbon. This chain is 5,10-methylenetetrahydrofolate reductase, found in Sphingobium sp. (strain NBRC 103272 / SYK-6).